The following is a 626-amino-acid chain: Basic helix-loop-helix ARNT-like protein 1 (626 aa).

The segment at 1-58 (MADQRMDISSTISDFMSPGPTDLLSSSLGTSGVDCNRKRKGSATDYQESMDTDKDDPH) is disordered. Ser-17 carries the post-translational modification Phosphoserine; by GSK3-beta. Residues 17-32 (SPGPTDLLSSSLGTSG) are compositionally biased toward low complexity. Thr-21 bears the Phosphothreonine; by GSK3-beta mark. The short motif at 36–41 (NRKRKG) is the Nuclear localization signal element. Positions 72–125 (NAREAHSQIEKRRRDKMNSFIDELASLVPTCNAMSRKLDKLTVLRMAVQHMKTL) constitute a bHLH domain. Phosphoserine is present on Ser-78. Ser-90 is modified (phosphoserine; by CK2). Positions 142-152 (LSDDELKHLIL) match the Nuclear export signal 1 motif. Positions 143–215 (SDDELKHLIL…EQLSSSDTAP (73 aa)) constitute a PAS 1 domain. A Glycyl lysine isopeptide (Lys-Gly) (interchain with G-Cter in SUMO2 and SUMO3) cross-link involves residue Lys-252. Lys-259 is covalently cross-linked (Glycyl lysine isopeptide (Lys-Gly) (interchain with G-Cter in SUMO); alternate). Lys-259 participates in a covalent cross-link: Glycyl lysine isopeptide (Lys-Gly) (interchain with G-Cter in SUMO2); alternate. One can recognise a PAS 2 domain in the interval 326–396 (PQPVNGEIRV…ECHRQVLQTR (71 aa)). Positions 361 to 369 (LAYLPQELL) match the Nuclear export signal 2 motif. The 44-residue stretch at 401–444 (TNCYKFKIKDGSFITLRSRWFSFMNPWTKEVEYIVSTNTVVLAN) folds into the PAC domain. 2 disordered regions span residues 459–492 (SPHS…RAGA) and 511–595 (GSSP…SPSN). Residues 508–588 (RIRGSSPSSC…IGIDMIDNDQ (81 aa)) form an interaction with CIART region. The segment covering 511–521 (GSSPSSCGSSP) has biased composition (low complexity). An N6-acetyllysine modification is found at Lys-538.

Component of the circadian clock oscillator which includes the CRY1/2 proteins, CLOCK or NPAS2, BMAL1 or BMAL2, CSNK1D and/or CSNK1E, TIMELESS and the PER1/2/3 proteins. Forms a heterodimer with CLOCK. The CLOCK-BMAL1 heterodimer is required for E-box-dependent transactivation, for CLOCK nuclear translocation and degradation, and, for phosphorylation of both CLOCK and BMAL1. Part of a nuclear complex which also includes RACK1 and PRKCA; RACK1 and PRKCA are recruited to the complex in a circadian manner. Interacts with NPAS2. Interacts with EZH2. Interacts with SUMO3. Interacts with SIRT1. Interacts with AHR. Interacts with ID1, ID2 and ID3. Interacts with DDX4. Interacts with OGT. Interacts with EED and SUZ12. Interacts with MTA1. Interacts with CIART. Interacts with HSP90. Interacts with KAT2B and EP300. Interacts with BHLHE40/DEC1 and BHLHE41/DEC2. Interacts with RELB and the interaction is enhanced in the presence of CLOCK. Interacts with PER1, PER2, CRY1 and CRY2 and this interaction requires a translocation to the nucleus. Interaction of the CLOCK-BMAL1 heterodimer with PER or CRY inhibits transcription activation. Interaction of the CLOCK-BMAL1 with CRY1 is independent of DNA but with PER2 is off DNA. The CLOCK-BMAL1 heterodimer interacts with GSK3B. Interacts with KDM5A. Interacts with KMT2A; in a circadian manner. Interacts with UBE3A. Interacts with PRKCG. Interacts with MAGEL2. Interacts with NCOA2. Interacts with THRAP3. The CLOCK-BMAL1 heterodimer interacts with PASD1. Interacts with PASD1. Interacts with USP9X. Interacts with PIWIL2 (via PIWI domain). Interacts with HDAC3. Interacts with HNF4A. In terms of processing, ubiquitinated, leading to its proteasomal degradation. Deubiquitinated by USP9X. O-glycosylated; contains O-GlcNAc. O-glycosylation by OGT prevents protein degradation by inhibiting ubiquitination. It also stabilizes the CLOCK-BMAL1 heterodimer thereby increasing CLOCK-BMAL1-mediated transcription of genes in the negative loop of the circadian clock such as PER1/2/3 and CRY1/2. Post-translationally, acetylated on Lys-538 by CLOCK during the repression phase of the circadian cycle. Acetylation facilitates recruitment of CRY1 protein and initiates the repression phase of the circadian cycle. Acetylated at Lys-538 by KAT5 during the activation phase of the cycle, leading to recruitment of the positive transcription elongation factor b (P-TEFb) and BRD4, followed by productive elongation of circadian transcripts. Deacetylated by SIRT1, which may result in decreased protein stability. In terms of processing, phosphorylated upon dimerization with CLOCK. Phosphorylation enhances the transcriptional activity, alters the subcellular localization and decreases the stability of the CLOCK-BMAL1 heterodimer by promoting its degradation. Phosphorylation shows circadian variations in the liver with a peak between CT10 to CT14. Phosphorylation at Ser-90 by CK2 is essential for its nuclear localization, its interaction with CLOCK and controls CLOCK nuclear entry. Dephosphorylation at Ser-78 is important for dimerization with CLOCK and transcriptional activity. Sumoylated on Lys-259 upon dimerization with CLOCK. Predominantly conjugated to poly-SUMO2/3 rather than SUMO1 and the level of these conjugates undergo rhythmic variation, peaking at CT9-CT12. Sumoylation localizes it exclusively to the PML body and promotes its ubiquitination in the PML body, ubiquitin-dependent proteasomal degradation and the transcriptional activity of the CLOCK-BMAL1 heterodimer. Post-translationally, undergoes lysosome-mediated degradation in a time-dependent manner in the liver.

It is found in the nucleus. The protein resides in the cytoplasm. The protein localises to the PML body. Its function is as follows. Transcriptional activator which forms a core component of the circadian clock. The circadian clock, an internal time-keeping system, regulates various physiological processes through the generation of approximately 24 hour circadian rhythms in gene expression, which are translated into rhythms in metabolism and behavior. It is derived from the Latin roots 'circa' (about) and 'diem' (day) and acts as an important regulator of a wide array of physiological functions including metabolism, sleep, body temperature, blood pressure, endocrine, immune, cardiovascular, and renal function. Consists of two major components: the central clock, residing in the suprachiasmatic nucleus (SCN) of the brain, and the peripheral clocks that are present in nearly every tissue and organ system. Both the central and peripheral clocks can be reset by environmental cues, also known as Zeitgebers (German for 'timegivers'). The predominant Zeitgeber for the central clock is light, which is sensed by retina and signals directly to the SCN. The central clock entrains the peripheral clocks through neuronal and hormonal signals, body temperature and feeding-related cues, aligning all clocks with the external light/dark cycle. Circadian rhythms allow an organism to achieve temporal homeostasis with its environment at the molecular level by regulating gene expression to create a peak of protein expression once every 24 hours to control when a particular physiological process is most active with respect to the solar day. Transcription and translation of core clock components (CLOCK, NPAS2, BMAL1, BMAL2, PER1, PER2, PER3, CRY1 and CRY2) plays a critical role in rhythm generation, whereas delays imposed by post-translational modifications (PTMs) are important for determining the period (tau) of the rhythms (tau refers to the period of a rhythm and is the length, in time, of one complete cycle). A diurnal rhythm is synchronized with the day/night cycle, while the ultradian and infradian rhythms have a period shorter and longer than 24 hours, respectively. Disruptions in the circadian rhythms contribute to the pathology of cardiovascular diseases, cancer, metabolic syndromes and aging. A transcription/translation feedback loop (TTFL) forms the core of the molecular circadian clock mechanism. Transcription factors, CLOCK or NPAS2 and BMAL1 or BMAL2, form the positive limb of the feedback loop, act in the form of a heterodimer and activate the transcription of core clock genes and clock-controlled genes (involved in key metabolic processes), harboring E-box elements (5'-CACGTG-3') within their promoters. The core clock genes: PER1/2/3 and CRY1/2 which are transcriptional repressors form the negative limb of the feedback loop and interact with the CLOCK|NPAS2-BMAL1|BMAL2 heterodimer inhibiting its activity and thereby negatively regulating their own expression. This heterodimer also activates nuclear receptors NR1D1/2 and RORA/B/G, which form a second feedback loop and which activate and repress BMAL1 transcription, respectively. BMAL1 positively regulates myogenesis and negatively regulates adipogenesis via the transcriptional control of the genes of the canonical Wnt signaling pathway. Plays a role in normal pancreatic beta-cell function; regulates glucose-stimulated insulin secretion via the regulation of antioxidant genes NFE2L2/NRF2 and its targets SESN2, PRDX3, CCLC and CCLM. Negatively regulates the mTORC1 signaling pathway; regulates the expression of MTOR and DEPTOR. Controls diurnal oscillations of Ly6C inflammatory monocytes; rhythmic recruitment of the PRC2 complex imparts diurnal variation to chemokine expression that is necessary to sustain Ly6C monocyte rhythms. Regulates the expression of HSD3B2, STAR, PTGS2, CYP11A1, CYP19A1 and LHCGR in the ovary and also the genes involved in hair growth. Plays an important role in adult hippocampal neurogenesis by regulating the timely entry of neural stem/progenitor cells (NSPCs) into the cell cycle and the number of cell divisions that take place prior to cell-cycle exit. Regulates the circadian expression of CIART and KLF11. The CLOCK-BMAL1 heterodimer regulates the circadian expression of SERPINE1/PAI1, VWF, B3, CCRN4L/NOC, NAMPT, DBP, MYOD1, PPARGC1A, PPARGC1B, SIRT1, GYS2, F7, NGFR, GNRHR, BHLHE40/DEC1, ATF4, MTA1, KLF10 and also genes implicated in glucose and lipid metabolism. Promotes rhythmic chromatin opening, regulating the DNA accessibility of other transcription factors. The NPAS2-BMAL1 heterodimer positively regulates the expression of MAOA, F7 and LDHA and modulates the circadian rhythm of daytime contrast sensitivity by regulating the rhythmic expression of adenylate cyclase type 1 (ADCY1) in the retina. The preferred binding motif for the CLOCK-BMAL1 heterodimer is 5'-CACGTGA-3', which contains a flanking adenine nucleotide at the 3-prime end of the canonical 6-nucleotide E-box sequence. CLOCK specifically binds to the half-site 5'-CAC-3', while BMAL1 binds to the half-site 5'-GTGA-3'. The CLOCK-BMAL1 heterodimer also recognizes the non-canonical E-box motifs 5'-AACGTGA-3' and 5'-CATGTGA-3'. Essential for the rhythmic interaction of CLOCK with ASS1 and plays a critical role in positively regulating CLOCK-mediated acetylation of ASS1. Plays a role in protecting against lethal sepsis by limiting the expression of immune checkpoint protein CD274 in macrophages in a PKM2-dependent manner. Regulates the diurnal rhythms of skeletal muscle metabolism via transcriptional activation of genes promoting triglyceride synthesis (DGAT2) and metabolic efficiency (COQ10B). In Mesocricetus auratus (Golden hamster), this protein is Basic helix-loop-helix ARNT-like protein 1 (BMAL1).